The following is a 1036-amino-acid chain: Protein translocase subunit SecA, chloroplastic (1036 aa).

A chloroplast-targeting transit peptide spans 1–76 (MESCARSASQ…KIGELMQVRA (76 aa)). Position 186–193 (186–193 (MRTGEGKT)) interacts with ATP. Residues 995-1036 (NQEQQQKGKPDSSNVENKRIGDANLNPVSVTESPSSDSPQNT) are disordered. Over residues 1000-1015 (QKGKPDSSNVENKRIG) the composition is skewed to basic and acidic residues. A compositionally biased stretch (polar residues) spans 1020 to 1036 (NPVSVTESPSSDSPQNT).

It belongs to the SecA family.

Its subcellular location is the plastid. The protein resides in the chloroplast stroma. It is found in the chloroplast thylakoid membrane. The catalysed reaction is ATP + H2O + chloroplast-proteinSide 1 = ADP + phosphate + chloroplast-proteinSide 2.. Functionally, has a central role in coupling the hydrolysis of ATP to the transfer of proteins across the thylakoid membrane. This chain is Protein translocase subunit SecA, chloroplastic, found in Spinacia oleracea (Spinach).